Here is a 695-residue protein sequence, read N- to C-terminus: A-kinase anchor protein 17A (695 aa).

The PKA-RI and PKA-RII subunit binding domain stretch occupies residues 83-112 (VENKSLVKSFLACLDGKTIKLSGFSDILKV). A Glycyl lysine isopeptide (Lys-Gly) (interchain with G-Cter in SUMO1); alternate cross-link involves residue K118. Residue K118 forms a Glycyl lysine isopeptide (Lys-Gly) (interchain with G-Cter in SUMO2); alternate linkage. In terms of domain architecture, RRM spans 147-256 (DTIHLEGLPC…KAVACNIKVS (110 aa)). The disordered stretch occupies residues 279–337 (QELEQQREEQKRREKEAEERQRAEERKQKELEELERERKREEKLRKREQKQRDRELRRN). The interval 425–454 (LGLQRKERELRERLLSILLSKKPDDSHTHD) is PKA-RI-alpha subunit binding domain. Residues 482-695 (TTLHPLGGQP…PSRHRSTWNR (214 aa)) are disordered. The residue at position 537 (S537) is a Phosphoserine. A compositionally biased stretch (basic and acidic residues) spans 567–585 (VSRKDTRSEQDKCNREPSK). Composition is skewed to basic residues over residues 598–609 (RHKRERSRARRA) and 618–628 (RKERRPHKKHA). Residues 629–644 (YKDDSPRRRSTSPDHT) show a composition bias toward basic and acidic residues. S633 carries the post-translational modification Phosphoserine. Basic residues-rich tracts occupy residues 645-658 (RSRR…HRRE) and 666-695 (SASR…TWNR).

Monomer. Component of the spliceosome. Interacts with ZRANB2 and SFRS1/ASF through its Arg/Ser-rich domain. Interacts with RI and RII subunits of PKA. Widely expressed. Found in heart, brain, lung, liver, skeletal muscle, kidney and pancreas. Expressed in activated B-cells and placenta. Expressed in all cell lines tested including Jurkat-TAg, U-937 and HEK293 cells.

The protein resides in the nucleus speckle. Its function is as follows. Splice factor regulating alternative splice site selection for certain mRNA precursors. Mediates regulation of pre-mRNA splicing in a PKA-dependent manner. The polypeptide is A-kinase anchor protein 17A (AKAP17A) (Homo sapiens (Human)).